Reading from the N-terminus, the 94-residue chain is Selenoprotein K (94 aa).

Residues 20–42 traverse the membrane as a helical segment; it reads LSFITDFFWGIAEFVVFFFKTLL. The segment at 48 to 94 is disordered; sequence KRRGYGGSSDSRYDDGRGPPGNPPRRMGRISHLRGPSPPPMAGGUGR. A non-standard amino acid (selenocysteine) is located at residue Sec-92.

This sequence belongs to the selenoprotein K family. In terms of assembly, interacts with DERL1, DERL2, DERL3 and SELENOS. The SELENOK-SELENOS complex interacts with VCP. Interacts with ZDHHC6. Cleaved by CAPN2/m-calpain in resting macrophages but not in activated macrophages. Macrophage activation up-regulates expression of the calpain inhibitor CAST/calpastatin, resulting in inhibition of CAPN2 activity. In terms of processing, truncated SELENOK proteins produced by failed UGA/Sec decoding are ubiquitinated by the CRL2(KLHDC2) complex, which recognizes the diglycine (Gly-Gly) at the C-terminus of truncated SELENOK proteins.

It localises to the endoplasmic reticulum membrane. The protein localises to the cell membrane. In terms of biological role, required for Ca(2+) flux in immune cells and plays a role in T-cell proliferation and in T-cell and neutrophil migration. Involved in endoplasmic reticulum-associated degradation (ERAD) of soluble glycosylated proteins. Required for palmitoylation and cell surface expression of CD36 and involved in macrophage uptake of low-density lipoprotein and in foam cell formation. Together with ZDHHC6, required for palmitoylation of ITPR1 in immune cells, leading to regulate ITPR1 stability and function. Plays a role in protection of cells from ER stress-induced apoptosis. Protects cells from oxidative stress when overexpressed in cardiomyocytes. This is Selenoprotein K from Rattus norvegicus (Rat).